The following is a 209-amino-acid chain: MHNKNLDCTLYLVTDRDILKGRDLKKVLEEAILGGTTLVQLREKNVSSKEFYEIAKDIKVITDKYNIPLIINDRVDIALAVNAEGIHIGQKDLPANIVRKIIGEDKILGVSANTIEDALKAQRDGADYLGVGAIFPTNSKKDAESTSIETLKEIKNAVNIPIVAIGGINENNVQKLKETNIDGIAVISTILGKEDVKKACEELTGFFNE.

4-amino-2-methyl-5-(diphosphooxymethyl)pyrimidine is bound by residues 40–44 and N72; that span reads QLREK. Mg(2+)-binding residues include D73 and D92. S111 contacts 4-amino-2-methyl-5-(diphosphooxymethyl)pyrimidine. 137–139 is a 2-[(2R,5Z)-2-carboxy-4-methylthiazol-5(2H)-ylidene]ethyl phosphate binding site; that stretch reads TNS. 4-amino-2-methyl-5-(diphosphooxymethyl)pyrimidine is bound at residue K140. 2-[(2R,5Z)-2-carboxy-4-methylthiazol-5(2H)-ylidene]ethyl phosphate contacts are provided by residues G167 and 187–188; that span reads IS.

The protein belongs to the thiamine-phosphate synthase family. Mg(2+) serves as cofactor.

It carries out the reaction 2-[(2R,5Z)-2-carboxy-4-methylthiazol-5(2H)-ylidene]ethyl phosphate + 4-amino-2-methyl-5-(diphosphooxymethyl)pyrimidine + 2 H(+) = thiamine phosphate + CO2 + diphosphate. The enzyme catalyses 2-(2-carboxy-4-methylthiazol-5-yl)ethyl phosphate + 4-amino-2-methyl-5-(diphosphooxymethyl)pyrimidine + 2 H(+) = thiamine phosphate + CO2 + diphosphate. The catalysed reaction is 4-methyl-5-(2-phosphooxyethyl)-thiazole + 4-amino-2-methyl-5-(diphosphooxymethyl)pyrimidine + H(+) = thiamine phosphate + diphosphate. It participates in cofactor biosynthesis; thiamine diphosphate biosynthesis; thiamine phosphate from 4-amino-2-methyl-5-diphosphomethylpyrimidine and 4-methyl-5-(2-phosphoethyl)-thiazole: step 1/1. Condenses 4-methyl-5-(beta-hydroxyethyl)thiazole monophosphate (THZ-P) and 2-methyl-4-amino-5-hydroxymethyl pyrimidine pyrophosphate (HMP-PP) to form thiamine monophosphate (TMP). This chain is Thiamine-phosphate synthase, found in Clostridium tetani (strain Massachusetts / E88).